Consider the following 243-residue polypeptide: MIGIIGGTHILEIKVLKDVEETRIETPYGTAEIDVGRVDGIDVAIIQRHGKRKDKPPHRINHAANFYALKSLGVKYVIGMGSVGALREEYSLPSLIIPHDYIDFFSGVTIYNDSLVHVTPGFDEYLREVLVEVARKISSFPVIDKGVYFQTRGPRLETKAEIAMIKSFADCVGMTAGSEATIARELGLSYAIVCTMDNYAHGIKNQSIDYREIVEKAKENARECLKIVEEAVKKVWEEKIQRT.

Phosphate contacts are provided by residues threonine 8 and 48–49 (RH). Methionine 174 provides a ligand contact to substrate. Threonine 175 serves as a coordination point for phosphate. Residue 198–200 (NYA) participates in substrate binding.

The protein belongs to the PNP/MTAP phosphorylase family. MTAP subfamily. As to quaternary structure, homohexamer. Dimer of a homotrimer.

It carries out the reaction a purine D-ribonucleoside + phosphate = a purine nucleobase + alpha-D-ribose 1-phosphate. Its pathway is purine metabolism; purine nucleoside salvage. Functionally, purine nucleoside phosphorylase which is highly specific for 6-oxopurine nucleosides. Cleaves guanosine or inosine to respective bases and sugar-1-phosphate molecules. Involved in purine salvage. This is Probable 6-oxopurine nucleoside phosphorylase from Archaeoglobus fulgidus (strain ATCC 49558 / DSM 4304 / JCM 9628 / NBRC 100126 / VC-16).